We begin with the raw amino-acid sequence, 466 residues long: Adenosylhomocysteinase (466 aa).

The substrate site is built by T57, D132, and E192. Residue 193 to 195 (TTT) coordinates NAD(+). Substrate-binding residues include K222 and D226. NAD(+)-binding positions include N227, 256–261 (GYGDVG), E279, N314, 335–337 (IGH), and N380.

It belongs to the adenosylhomocysteinase family. The cofactor is NAD(+).

The protein resides in the cytoplasm. It carries out the reaction S-adenosyl-L-homocysteine + H2O = L-homocysteine + adenosine. Its pathway is amino-acid biosynthesis; L-homocysteine biosynthesis; L-homocysteine from S-adenosyl-L-homocysteine: step 1/1. In terms of biological role, may play a key role in the regulation of the intracellular concentration of adenosylhomocysteine. The sequence is that of Adenosylhomocysteinase from Rhizobium meliloti (strain 1021) (Ensifer meliloti).